An 810-amino-acid chain; its full sequence is Phospholipase D alpha 2 (810 aa).

Residues 1-126 (MEECLLHGRL…LHGEEVDRWV (126 aa)) form the C2 domain. Ca(2+) is bound at residue Asp-187. The PLD phosphodiesterase 1 domain occupies 327-365 (TMFTHHQKIVVVDSEMPSGGSRSRRIVSFVGGLDLCDGR). Residues His-332, Lys-334, and Asp-339 contribute to the active site. His-332 contacts a 1,2-diacyl-sn-glycero-3-phosphate. Residues His-371 and His-405 each contribute to the Ca(2+) site. Positions 521 and 661 each coordinate a 1,2-diacyl-sn-glycero-3-phosphate. In terms of domain architecture, PLD phosphodiesterase 2 spans 656–683 (FMIYVHTKMMIVDDEYIIIGSANINQRS). Catalysis depends on residues His-661, Lys-663, and Asp-668. Ca(2+) is bound at residue Glu-722.

This sequence belongs to the phospholipase D family. C2-PLD subfamily. Requires Ca(2+) as cofactor. In terms of tissue distribution, highly expressed in roots, stems and flowers, moderately in leaves, seedlings and siliques. Not detected in dry seeds.

Its subcellular location is the cytoplasm. The protein resides in the membrane. It localises to the vacuole. It is found in the cytoplasmic vesicle. The protein localises to the clathrin-coated vesicle. It carries out the reaction a 1,2-diacyl-sn-glycero-3-phosphocholine + H2O = a 1,2-diacyl-sn-glycero-3-phosphate + choline + H(+). Functionally, hydrolyzes glycerol-phospholipids at the terminal phosphodiesteric bond to generate phosphatidic acids (PA). Plays an important role in various cellular processes, including phytohormone action and response to stress, characterized by acidification of the cell. In Arabidopsis thaliana (Mouse-ear cress), this protein is Phospholipase D alpha 2.